Reading from the N-terminus, the 326-residue chain is Acetyl-coenzyme A carboxylase carboxyl transferase subunit alpha (326 aa).

The region spanning Lys44–Glu298 is the CoA carboxyltransferase C-terminal domain.

It belongs to the AccA family. In terms of assembly, acetyl-CoA carboxylase is a heterohexamer composed of biotin carboxyl carrier protein (AccB), biotin carboxylase (AccC) and two subunits each of ACCase subunit alpha (AccA) and ACCase subunit beta (AccD).

The protein resides in the cytoplasm. It carries out the reaction N(6)-carboxybiotinyl-L-lysyl-[protein] + acetyl-CoA = N(6)-biotinyl-L-lysyl-[protein] + malonyl-CoA. It participates in lipid metabolism; malonyl-CoA biosynthesis; malonyl-CoA from acetyl-CoA: step 1/1. In terms of biological role, component of the acetyl coenzyme A carboxylase (ACC) complex. First, biotin carboxylase catalyzes the carboxylation of biotin on its carrier protein (BCCP) and then the CO(2) group is transferred by the carboxyltransferase to acetyl-CoA to form malonyl-CoA. This chain is Acetyl-coenzyme A carboxylase carboxyl transferase subunit alpha, found in Trichormus variabilis (strain ATCC 29413 / PCC 7937) (Anabaena variabilis).